The chain runs to 658 residues: MKKQIISLGALAVASSLFTWDNKADAIVTKDYSKESRVNEKSKKGATVSDYYYWKIIDSLEAQFTGAIDLLENYKYGDPIYKEAKDRLMTRVLGEDQYLLKKKIDEYELYKKWYKSSNKNTNMLTFHKYNLYNLTMNEYNDIFNSLKDAVYQFNKEVKEIEHKNVDLKQFDKDGEDKATKEVYDLVSEIDTLVVTYYADKDYGEHAKELRAKLDLILGDTDNPHKITNERIKKEMIDDLNSIIDDFFMETKQNRPNSITKYDPTKHNFKEKSENKPNFDKLVEETKKAVKEADESWKNKTVKKYEETVTKSPVVKEEKKVEEPQLPKVGNQQEVKTTAGKAEETTQPVAQPLVKIPQETIYGETVKGPEYPTMENKTLQGEIVQGPDFLTMEQNRPSLSDNYTQPTTPNPILEGLEGSSSKLEIKPQGTESTLKGIQGESSDIEVKPQATETTEASQYGPRPQFNKTPKYVKYRDAGTGIREYNDGTFGYEARPRFNKPSETNAYNVTTNQDGTVSYGARPTQNKPSETNAYNVTTHANGQVSYGARPTQNKPSKTNAYNVTTHANGQVSYGARPTQKKPSKTNAYNVTTHANGQVSYGARPTYKKPSETNAYNVTTHANGQVSYGARPTQKKPSETNAYNVTTHADGTATYGPRVTK.

The first 26 residues, 1-26 (MKKQIISLGALAVASSLFTWDNKADA), serve as a signal peptide directing secretion. 4 stretches are compositionally biased toward polar residues: residues 391-406 (MEQNRPSLSDNYTQPT), 428-440 (GTESTLKGIQGES), 499-514 (PSETNAYNVTTNQDGT), and 521-531 (PTQNKPSETNA). Residues 391 to 531 (MEQNRPSLSD…TQNKPSETNA (141 aa)) form a disordered region. A run of 6 repeats spans residues 492–518 (ARPRFNKPSETNAYNVTTNQDGTVSYG), 519–545 (ARPTQNKPSETNAYNVTTHANGQVSYG), 546–572 (ARPTQNKPSKTNAYNVTTHANGQVSYG), 573–599 (ARPTQKKPSKTNAYNVTTHANGQVSYG), 600–626 (ARPTYKKPSETNAYNVTTHANGQVSYG), and 627–653 (ARPTQKKPSETNAYNVTTHADGTATYG). The segment at 492 to 653 (ARPRFNKPSE…THADGTATYG (162 aa)) is 6 X 27 AA tandem repeats of A-R-P-[RT]-[FQY]-[NK]-K-P-S-[EK]-T-N-A-Y-N-V-T-T-[NH]-[QA]-[DN]-G-[TQ]-[VA]-[ST]-Y-G. The disordered stretch occupies residues 619–658 (ANGQVSYGARPTQKKPSETNAYNVTTHADGTATYGPRVTK). The span at 636–646 (ETNAYNVTTHA) shows a compositional bias: polar residues.

It belongs to the staphylocoagulase family.

Functionally, staphylocoagulase is an extracellular protein which specifically forms a complex with human prothrombin. This complex named staphylothrombin can clot fibrinogen without any proteolytic cleavage of prothrombin. This is Staphylocoagulase from Staphylococcus aureus.